The primary structure comprises 147 residues: MALKRIHKELNDLARDPPAQCSAGPVGDDMFHWQATIMGPNDSPYQGGVFFLTIHFPTDYPFKPPKVAFTTRIYHPNINSNGSICLDILRSQWSPALTISKVLLSICSLLCDPNPDDPLVPEIARIYKTDREKYNRIAREWTQKYAM.

Residues 1–147 form the UBC core domain; it reads MALKRIHKEL…AREWTQKYAM (147 aa). Cysteine 85 (glycyl thioester intermediate) is an active-site residue.

Belongs to the ubiquitin-conjugating enzyme family. As to quaternary structure, interacts with SCF (SKP1-CUL1-F-box protein) E3 ubiquitin ligase complex. Interacts with CNOT4 (via RING domain). Interacts with E3 ubiquitin-protein ligases CBLC, PJA1 and PJA2. Interacts with PDZRN3. Interacts with PPP1R11. Interacts with E3 ubiquitin-protein ligase PHF7; the interaction inhibits cleavage of PHF7 and promotes association of the complex with the nucleosome core particle.

The enzyme catalyses S-ubiquitinyl-[E1 ubiquitin-activating enzyme]-L-cysteine + [E2 ubiquitin-conjugating enzyme]-L-cysteine = [E1 ubiquitin-activating enzyme]-L-cysteine + S-ubiquitinyl-[E2 ubiquitin-conjugating enzyme]-L-cysteine.. It catalyses the reaction S-ubiquitinyl-[E1 ubiquitin-activating enzyme]-L-cysteine + [acceptor protein]-L-lysine = [E1 ubiquitin-activating enzyme]-L-cysteine + N(6)-monoubiquitinyl-[acceptor protein]-L-lysine.. Its pathway is protein modification; protein ubiquitination. Accepts ubiquitin from the E1 complex and catalyzes its covalent attachment to other proteins. In vitro catalyzes 'Lys-48'-linked polyubiquitination. Mediates the selective degradation of short-lived and abnormal proteins. Functions in the E6/E6-AP-induced ubiquitination of p53/TP53. Mediates ubiquitination of PEX5 and SQSTM1 and autoubiquitination of STUB1 and TRAF6. Involved in the signal-induced conjugation and subsequent degradation of NFKBIA, FBXW2-mediated GCM1 ubiquitination and degradation, MDM2-dependent degradation of p53/TP53 and the activation of MAVS in the mitochondria by RIGI in response to viral infection. Essential for viral activation of IRF3. The chain is Ubiquitin-conjugating enzyme E2 D2 (UBE2D2) from Bos taurus (Bovine).